The chain runs to 220 residues: Glutamine amidotransferase-like class 1 domain-containing protein 1 (220 aa).

The N-terminal stretch at 1–38 (MASERLPNRPACLLVASGAAEGVSAQSFLHCFTMASTA) is a signal peptide. An N-linked (GlcNAc...) asparagine glycan is attached at N201.

This sequence belongs to the peptidase C56 family. In terms of assembly, homotetramer. Component of the FERRY complex composed of five subunits, TBCK, PPP1R21, FERRY3, CRYZL1 and GATD1 with a ratio of 1:2:1:2:4, respectively.

The protein resides in the secreted. It is found in the early endosome. Its function is as follows. Component of the FERRY complex (Five-subunit Endosomal Rab5 and RNA/ribosome intermediary). The FERRY complex directly interacts with mRNAs and RAB5A, and functions as a RAB5A effector involved in the localization and the distribution of specific mRNAs most likely by mediating their endosomal transport. The complex recruits mRNAs and ribosomes to early endosomes through direct mRNA-interaction. The polypeptide is Glutamine amidotransferase-like class 1 domain-containing protein 1 (Homo sapiens (Human)).